The primary structure comprises 698 residues: Testis-specific gene 10 protein (698 aa).

The residue at position 163 (Ser163) is a Phosphoserine. Residues 556-689 (QMANERISMQ…SPDRGLDRSL (134 aa)) are interaction with HIF1A. A compositionally biased stretch (polar residues) spans 659–670 (HMSSTMKPNTKC). Residues 659-685 (HMSSTMKPNTKCHSPERAHHRSPDRGL) form a disordered region. Basic and acidic residues predominate over residues 671–685 (HSPERAHHRSPDRGL). A Phosphoserine modification is found at Ser688.

The protein belongs to the CEP135/TSGA10 family. In terms of assembly, interacts with HIF1A. In terms of processing, processed into N-terminal 27-kDa and C-terminal 55-kDa fragments. Expressed in the testis, in spermatozoa (at protein level). Expressed in actively dividing fetal tissues, including sternum, intestine, limb, kidney and stomach.

It localises to the cytoplasm. The protein resides in the cytoskeleton. Its subcellular location is the microtubule organizing center. The protein localises to the centrosome. It is found in the centriole. Functionally, plays a role in spermatogenesis. When overexpressed, prevents nuclear localization of HIF1A. The protein is Testis-specific gene 10 protein (TSGA10) of Homo sapiens (Human).